The chain runs to 130 residues: Small ribosomal subunit protein uS11 (130 aa).

This sequence belongs to the universal ribosomal protein uS11 family. In terms of assembly, part of the 30S ribosomal subunit. Interacts with proteins S7 and S18. Binds to IF-3.

Functionally, located on the platform of the 30S subunit, it bridges several disparate RNA helices of the 16S rRNA. Forms part of the Shine-Dalgarno cleft in the 70S ribosome. This is Small ribosomal subunit protein uS11 from Prochlorococcus marinus (strain MIT 9215).